A 194-amino-acid chain; its full sequence is Holliday junction branch migration complex subunit RuvA (194 aa).

The segment at methionine 1–leucine 63 is domain I. The segment at aspartate 64–valine 142 is domain II. The tract at residues serine 143–leucine 147 is flexible linker. Positions leucine 147–aspartate 194 are domain III.

It belongs to the RuvA family. Homotetramer. Forms an RuvA(8)-RuvB(12)-Holliday junction (HJ) complex. HJ DNA is sandwiched between 2 RuvA tetramers; dsDNA enters through RuvA and exits via RuvB. An RuvB hexamer assembles on each DNA strand where it exits the tetramer. Each RuvB hexamer is contacted by two RuvA subunits (via domain III) on 2 adjacent RuvB subunits; this complex drives branch migration. In the full resolvosome a probable DNA-RuvA(4)-RuvB(12)-RuvC(2) complex forms which resolves the HJ.

It is found in the cytoplasm. Functionally, the RuvA-RuvB-RuvC complex processes Holliday junction (HJ) DNA during genetic recombination and DNA repair, while the RuvA-RuvB complex plays an important role in the rescue of blocked DNA replication forks via replication fork reversal (RFR). RuvA specifically binds to HJ cruciform DNA, conferring on it an open structure. The RuvB hexamer acts as an ATP-dependent pump, pulling dsDNA into and through the RuvAB complex. HJ branch migration allows RuvC to scan DNA until it finds its consensus sequence, where it cleaves and resolves the cruciform DNA. This Fusobacterium nucleatum subsp. nucleatum (strain ATCC 25586 / DSM 15643 / BCRC 10681 / CIP 101130 / JCM 8532 / KCTC 2640 / LMG 13131 / VPI 4355) protein is Holliday junction branch migration complex subunit RuvA.